A 293-amino-acid chain; its full sequence is Bifunctional protein FolD 1 (293 aa).

NADP(+) contacts are provided by residues 174–176 and T240; that span reads GRS.

It belongs to the tetrahydrofolate dehydrogenase/cyclohydrolase family. Homodimer.

The catalysed reaction is (6R)-5,10-methylene-5,6,7,8-tetrahydrofolate + NADP(+) = (6R)-5,10-methenyltetrahydrofolate + NADPH. It catalyses the reaction (6R)-5,10-methenyltetrahydrofolate + H2O = (6R)-10-formyltetrahydrofolate + H(+). It participates in one-carbon metabolism; tetrahydrofolate interconversion. Catalyzes the oxidation of 5,10-methylenetetrahydrofolate to 5,10-methenyltetrahydrofolate and then the hydrolysis of 5,10-methenyltetrahydrofolate to 10-formyltetrahydrofolate. In Saccharopolyspora erythraea (strain ATCC 11635 / DSM 40517 / JCM 4748 / NBRC 13426 / NCIMB 8594 / NRRL 2338), this protein is Bifunctional protein FolD 1.